The sequence spans 706 residues: Elongation factor G 1 (706 aa).

A tr-type G domain is found at 8-290 (NRYRNIGICA…AVIDYLPAPT (283 aa)). GTP contacts are provided by residues 17–24 (AHVDAGKT), 88–92 (DTPGH), and 142–145 (NKMD).

Belongs to the TRAFAC class translation factor GTPase superfamily. Classic translation factor GTPase family. EF-G/EF-2 subfamily.

It is found in the cytoplasm. Catalyzes the GTP-dependent ribosomal translocation step during translation elongation. During this step, the ribosome changes from the pre-translocational (PRE) to the post-translocational (POST) state as the newly formed A-site-bound peptidyl-tRNA and P-site-bound deacylated tRNA move to the P and E sites, respectively. Catalyzes the coordinated movement of the two tRNA molecules, the mRNA and conformational changes in the ribosome. The protein is Elongation factor G 1 of Pseudomonas aeruginosa (strain ATCC 15692 / DSM 22644 / CIP 104116 / JCM 14847 / LMG 12228 / 1C / PRS 101 / PAO1).